The chain runs to 493 residues: Cytochrome P450 710A3 (493 aa).

The helical transmembrane segment at Val5–Leu25 threads the bilayer. Cys435 lines the heme pocket.

Belongs to the cytochrome P450 family. Requires heme as cofactor. In terms of tissue distribution, expressed in stems. Detected in primary root caps and immature petals.

Its subcellular location is the membrane. The catalysed reaction is 5-dehydroepisterol + NADPH + O2 + H(+) = ergosta-5,7,22,24(28)-tetraen-3beta-ol + NADP(+) + 2 H2O. Required to form the C-22 double bond in the sterol side chain. Possesses in vitro C-22 desaturase activity toward beta-sitosterol and produces stigmasterol. The chain is Cytochrome P450 710A3 from Arabidopsis thaliana (Mouse-ear cress).